Here is a 539-residue protein sequence, read N- to C-terminus: Laccase-1 (539 aa).

Positions 1 to 21 (MAFTAISLFLAALGVINTAFA) are cleaved as a signal peptide. 2 consecutive Plastocyanin-like domains span residues 37 to 154 (AEVN…YDPE) and 166 to 309 (ESTV…HYLG). Asn-78 carries N-linked (GlcNAc...) asparagine glycosylation. Cu cation contacts are provided by His-88 and His-90. 2 disulfide bridges follow: Cys-109–Cys-513 and Cys-141–Cys-228. N-linked (GlcNAc...) asparagine glycosylation is present at Asn-120. Cu cation-binding residues include His-133 and His-135. N-linked (GlcNAc...) asparagine glycosylation is found at Asn-202, Asn-233, Asn-240, Asn-293, Asn-318, Asn-353, Asn-385, and Asn-405. Residues 374–495 (SPTVPVLLQI…GFAVVMAEDP (122 aa)) enclose the Plastocyanin-like 3 domain. 3 residues coordinate Cu cation: His-421, His-424, and His-426. Asn-457 is a glycosylation site (N-linked (GlcNAc...) asparagine). His-476, Cys-477, His-478, and His-482 together coordinate Cu cation. The N-linked (GlcNAc...) asparagine glycan is linked to Asn-532.

Belongs to the multicopper oxidase family. Cu cation is required as a cofactor.

It is found in the secreted. The enzyme catalyses 4 hydroquinone + O2 = 4 benzosemiquinone + 2 H2O. Its activity is regulated as follows. Inhibited by chloride ions. Inhibited by citrate. Inhibited by oxalate. Activated by acetate. In vitro, has activity towards 2,2'-azino-bis(3-ethylbenzthiazoline-6-sulfonic acid) (ABTS), 2,6-dimethoxy-phenol, and guaiacol. Although brown rot fungi preferentially degrade hemicellulose and cellulose, the enzyme may contribute to generating small amounts of lignin breakdown products required for catalytic reactions. The polypeptide is Laccase-1 (Fomitopsis schrenkii (Brown rot fungus)).